Here is a 74-residue protein sequence, read N- to C-terminus: Tetrahydromethanopterin S-methyltransferase subunit G (74 aa).

A helical transmembrane segment spans residues 50–70; the sequence is IGILYGLVIGLYLCMLYILLG.

Belongs to the MtrG family. In terms of assembly, the complex is composed of 8 subunits; MtrA, MtrB, MtrC, MtrD, MtrE, MtrF, MtrG and MtrH.

The protein localises to the cell membrane. The enzyme catalyses 5-methyl-5,6,7,8-tetrahydromethanopterin + coenzyme M + 2 Na(+)(in) = 5,6,7,8-tetrahydromethanopterin + methyl-coenzyme M + 2 Na(+)(out). The protein operates within one-carbon metabolism; methanogenesis from CO(2); methyl-coenzyme M from 5,10-methylene-5,6,7,8-tetrahydromethanopterin: step 2/2. Part of a complex that catalyzes the formation of methyl-coenzyme M and tetrahydromethanopterin from coenzyme M and methyl-tetrahydromethanopterin. This is an energy-conserving, sodium-ion translocating step. The chain is Tetrahydromethanopterin S-methyltransferase subunit G from Methanopyrus kandleri (strain AV19 / DSM 6324 / JCM 9639 / NBRC 100938).